We begin with the raw amino-acid sequence, 517 residues long: Tyrosine-protein kinase Fgr (517 aa).

A lipid anchor (N-myristoyl glycine) is attached at Gly2. Residues Cys3 and Cys6 are each lipidated (S-palmitoyl cysteine). Ser13 carries the post-translational modification Phosphoserine. Tyr32 is modified (phosphotyrosine). Ser50 is subject to Phosphoserine. The SH3 domain occupies 65–126 (TGVTIFVALY…PSNYVAPVDS (62 aa)). Positions 102–103 (WW) are interaction with CLNK. In terms of domain architecture, SH2 spans 132–229 (WYFGKISRKD…GLCYLLTAPC (98 aa)). Tyr196 is modified (phosphotyrosine). At Ser206 the chain carries Phosphoserine. The Protein kinase domain maps to 251–504 (IALERRLGTG…YLQSFLEDYF (254 aa)). ATP contacts are provided by residues 257 to 265 (LGTGCFGDV) and Lys279. Asp370 acts as the Proton acceptor in catalysis. Tyr400 bears the Phosphotyrosine mark. At Tyr511 the chain carries Phosphotyrosine; by SRC.

This sequence belongs to the protein kinase superfamily. Tyr protein kinase family. SRC subfamily. In terms of assembly, interacts with ITGB1, ITGB2, MS4A2/FCER1B, FCER1G and FCGR2. Interacts (via SH2 domain) with SYK (tyrosine phosphorylated). Interacts (via SH2 domain) with FLT3 (tyrosine phosphorylated). Interacts with PTK2/FAK1. Interacts (via SH2 domain) with HCLS1 (tyrosine phosphorylated by SYK). Interacts with SIRPA and PTPNS1. Interacts (not phosphorylated on tyrosine residues) with CBL; FGR tyrosine phosphorylation promotes dissociation. Interacts with CLNK. Ubiquitinated. Becomes ubiquitinated in response to ITGB2 signaling; this does not lead to degradation. Post-translationally, phosphorylated. Autophosphorylated on tyrosine residues. Becomes phosphorylated in response to FCGR2 engagement, cell adhesion and signaling by ITGB2. Prior phosphorylation at Tyr-511 by SRC inhibits ulterior autophosphorylation at Tyr-400. In terms of tissue distribution, expressed in natural killer cells (at protein level).

It localises to the cell membrane. The protein resides in the cell projection. The protein localises to the ruffle membrane. It is found in the cytoplasm. Its subcellular location is the cytosol. It localises to the cytoskeleton. The protein resides in the mitochondrion inner membrane. The protein localises to the mitochondrion intermembrane space. The catalysed reaction is L-tyrosyl-[protein] + ATP = O-phospho-L-tyrosyl-[protein] + ADP + H(+). With respect to regulation, activated by autophosphorylation. Prior phosphorylation at Tyr-511 by SRC inhibits ulterior autophosphorylation at Tyr-400. Activated by phorbol myristate acetate, phosphatidic acid and poly-Lys. Binding (via SH2 domain) of HCLS1 that is already phosphorylated by SYK strongly increases kinase activity. In terms of biological role, non-receptor tyrosine-protein kinase that transmits signals from cell surface receptors devoid of kinase activity and contributes to the regulation of immune responses, including neutrophil, monocyte, macrophage and mast cell functions, cytoskeleton remodeling in response to extracellular stimuli, phagocytosis, cell adhesion and migration. Promotes mast cell degranulation, release of inflammatory cytokines and IgE-mediated anaphylaxis. Acts downstream of receptors that bind the Fc region of immunoglobulins, such as MS4A2/FCER1B, FCER1G and FCGR2. Acts downstream of ITGB1 and ITGB2, and regulates actin cytoskeleton reorganization, cell spreading and adhesion. Depending on the context, activates or inhibits cellular responses. Functions as a negative regulator of ITGB2 signaling, phagocytosis and SYK activity in monocytes. Required for normal ITGB1 and ITGB2 signaling, normal cell spreading and adhesion in neutrophils and macrophages. Functions as a positive regulator of cell migration and regulates cytoskeleton reorganization via RAC1 activation. Phosphorylates SYK (in vitro) and promotes SYK-dependent activation of AKT1 and MAP kinase signaling. Phosphorylates PLD2 in antigen-stimulated mast cells, leading to PLD2 activation and the production of the signaling molecules lysophosphatidic acid and diacylglycerol. Promotes activation of PIK3R1. Phosphorylates FASLG, and thereby regulates its ubiquitination and subsequent internalization. Phosphorylates ABL1. Promotes phosphorylation of CBL, CTTN, PIK3R1, PTK2/FAK1, PTK2B/PYK2 and VAV2. Phosphorylates HCLS1 that has already been phosphorylated by SYK, but not unphosphorylated HCLS1. Together with CLNK, it acts as a negative regulator of natural killer cell-activating receptors and inhibits interferon-gamma production. This is Tyrosine-protein kinase Fgr (Fgr) from Mus musculus (Mouse).